Here is a 1722-residue protein sequence, read N- to C-terminus: Signal-induced proliferation-associated 1-like protein 2 (1722 aa).

Disordered regions lie at residues 1–29 (MSDP…RTMQ) and 44–72 (SMGP…TPAV). The span at 57–66 (EGGGGGGGPA) shows a compositional bias: gly residues. Phosphoserine occurs at positions 149, 380, and 384. The disordered stretch occupies residues 362–405 (ASAASQTPVPVGPAGGCESPLGSKEDLNSKENPDADEGDGKSND). Residues 384 to 403 (SKEDLNSKENPDADEGDGKS) are compositionally biased toward basic and acidic residues. A Rap-GAP domain is found at 596-813 (LLKLDEQGLS…RTRQEYLKDL (218 aa)). A PDZ domain is found at 951–1027 (EMTLRRNGLG…VKVVIIQPHE (77 aa)). A Phosphoserine modification is found at Ser-1030. Disordered stretches follow at residues 1068-1246 (HRVP…FGSG) and 1331-1360 (GSMG…SKST). Low complexity-rich tracts occupy residues 1091–1103 (LQCQ…AQAA) and 1120–1131 (SSPSNQSSSSDP). Positions 1195 to 1218 (YKERVLQKDGSCKESPNKLSHIGD) are enriched in basic and acidic residues. The segment covering 1220-1237 (SCSSHSSSNTLSSNTSSN) has biased composition (low complexity). Residue Ser-1245 is modified to Phosphoserine. Low complexity predominate over residues 1331–1355 (GSMGDLSEVSSHSSGSQHSGSPSAH). 7 positions are modified to phosphoserine: Ser-1461, Ser-1472, Ser-1478, Ser-1488, Ser-1549, Ser-1552, and Ser-1591. A coiled-coil region spans residues 1652–1712 (STLTGKVNQL…ATAQLRKFTE (61 aa)).

This is Signal-induced proliferation-associated 1-like protein 2 (Sipa1l2) from Mus musculus (Mouse).